The following is a 309-amino-acid chain: Probable lipid kinase YegS-like (309 aa).

In terms of domain architecture, DAGKc spans 1–134 (MAPSHWRLIL…IDLLRIDADH (134 aa)). Residues T39, 65-71 (GDGTLSE), and T96 contribute to the ATP site. L219, D222, and L224 together coordinate Mg(2+). E280 functions as the Proton acceptor in the catalytic mechanism.

It belongs to the diacylglycerol/lipid kinase family. YegS lipid kinase subfamily. It depends on Mg(2+) as a cofactor. The cofactor is Ca(2+).

Its subcellular location is the cytoplasm. In terms of biological role, probably phosphorylates lipids; the in vivo substrate is unknown. The protein is Probable lipid kinase YegS-like of Xanthomonas campestris pv. campestris (strain 8004).